The following is a 988-amino-acid chain: Ephrin type-B receptor 3 (988 aa).

Residues 1 to 24 (GVSSRARRPPGSSRSSRRGVTSEL) are disordered. Over 1–534 (GVSSRARRPP…TSKTFQELPL (534 aa)) the chain is Extracellular. The 179-residue stretch at 11 to 189 (GSSRSSRRGV…FYKKCSNTIA (179 aa)) folds into the Eph LBD domain. Residues C53 and C171 are joined by a disulfide bond. 2 Fibronectin type-III domains span residues 311–424 (VPSA…TNQA) and 425–522 (APSA…TAED). N-linked (GlcNAc...) asparagine glycosylation is found at N323 and N418. Residues 535 to 555 (IVGSATAGLLFVIVVVIIAIV) traverse the membrane as a helical segment. At 556–988 (CFRKGMVTEQ…QMNQTLPVQV (433 aa)) the chain is on the cytoplasmic side. At Y604 the chain carries Phosphotyrosine; by autocatalysis. The Protein kinase domain occupies 623 to 886 (VKIEEVIGAG…QIVNTLDKLI (264 aa)). Residues 629–637 (IGAGEFGEV) and K655 contribute to the ATP site. D748 acts as the Proton acceptor in catalysis. The 65-residue stretch at 915–979 (TTFTTVGDWL…LSSIQDMRLQ (65 aa)) folds into the SAM domain. The PDZ-binding signature appears at 986 to 988 (VQV).

It belongs to the protein kinase superfamily. Tyr protein kinase family. Ephrin receptor subfamily. In terms of assembly, heterotetramer upon binding of the ligand. The heterotetramer is composed of an ephrin dimer and a receptor dimer. Oligomerization is probably required to induce biological responses. Post-translationally, phosphorylated. Autophosphorylates upon ligand-binding. Autophosphorylation on Tyr-604 is required for interaction with SH2 domain-containing proteins. As to expression, present in 10-day embryonic brain and body tissues. Prominent expression in kidney. Lower expression in lung, and barely detectable in brain, liver, heart, skeletal muscle and thymus.

It is found in the cell membrane. It localises to the cell projection. The protein resides in the dendrite. It catalyses the reaction L-tyrosyl-[protein] + ATP = O-phospho-L-tyrosyl-[protein] + ADP + H(+). Its function is as follows. Receptor tyrosine kinase which binds promiscuously transmembrane ephrin-B family ligands residing on adjacent cells, leading to contact-dependent bidirectional signaling into neighboring cells. The signaling pathway downstream of the receptor is referred to as forward signaling while the signaling pathway downstream of the ephrin ligand is referred to as reverse signaling. Generally has an overlapping and redundant function with EPHB2. Like EPHB2, functions in axon guidance during development. In addition to its role in axon guidance also plays an important redundant role with other ephrin-B receptors in development and maturation of dendritic spines and the formation of excitatory synapses. May control other aspects of development through regulation of cell migration and positioning. The polypeptide is Ephrin type-B receptor 3 (EPHB3) (Gallus gallus (Chicken)).